The primary structure comprises 726 residues: Dipeptidyl-peptidase 5 (726 aa).

A signal peptide spans 1–19; the sequence is MAAAKWLIASLAFASSGLA. Residues asparagine 96 and asparagine 252 are each glycosylated (N-linked (GlcNAc...) asparagine). Positions 269–291 are disordered; that stretch reads AEPINKRNGPRTPQGIEGASSSP. Serine 558 acts as the Charge relay system in catalysis. An N-linked (GlcNAc...) asparagine glycan is attached at asparagine 605. Active-site charge relay system residues include aspartate 641 and histidine 673. N-linked (GlcNAc...) asparagine glycosylation is present at asparagine 699.

This sequence belongs to the peptidase S9C family.

It localises to the secreted. Its function is as follows. Extracellular dipeptidyl-peptidase which removes N-terminal dipeptides sequentially from polypeptides having unsubstituted N-termini. Contributes to pathogenicity. The chain is Dipeptidyl-peptidase 5 (DPP5) from Trichophyton tonsurans (Scalp ringworm fungus).